We begin with the raw amino-acid sequence, 372 residues long: Homeobox protein Nkx-2.1 (372 aa).

The segment at residues 161–220 is a DNA-binding region (homeobox); sequence RRKRRVLFSQAQVYELERRFKQQKYLSAPEREHLASMIHLTPTQVKIWFQNHRYKMKRQA. Disordered regions lie at residues 219–258, 269–288, and 312–340; these read QAKD…SPRR, KPCQ…SHAQ, and AGLG…SPAG. Over residues 233–244 the composition is skewed to gly residues; sequence SGGGGGGGGGAG. Residues 245–254 are compositionally biased toward low complexity; the sequence is CPQQQQAQQQ. Ser255 is subject to Phosphoserine. Low complexity predominate over residues 273 to 288; sequence AGAPAPGAASLQSHAQ.

The protein belongs to the NK-2 homeobox family. As to quaternary structure, interacts with WWTR1. In terms of processing, phosphorylated on serine residues by STK3/MST2. As to expression, thyroid, lung and brain.

It localises to the nucleus. Functionally, transcription factor that binds and activates the promoter of thyroid specific genes such as thyroglobulin, thyroperoxidase, and thyrotropin receptor. Crucial in the maintenance of the thyroid differentiation phenotype. May play a role in lung development and surfactant homeostasis. Forms a regulatory loop with GRHL2 that coordinates lung epithelial cell morphogenesis and differentiation. Activates the transcription of GNRHR and plays a role in enhancing the circadian oscillation of its gene expression. Represses the transcription of the circadian transcriptional repressor NR1D1. The sequence is that of Homeobox protein Nkx-2.1 from Mus musculus (Mouse).